The primary structure comprises 492 residues: JmjC domain-containing histone demethylation protein 1 (492 aa).

The segment at 4-72 (PNICQHCQLK…SYRCPNHKEG (69 aa)) adopts a PHD-type; atypical zinc-finger fold. In terms of domain architecture, JmjC spans 254–409 (TAVRQNDLVD…THLKIVEIEK (156 aa)). Threonine 302 provides a ligand contact to substrate. Residues histidine 305 and aspartate 307 each contribute to the Fe cation site. Lysine 322 contacts substrate. Histidine 377 is a Fe cation binding site.

It belongs to the JHDM1 histone demethylase family. Fe(2+) is required as a cofactor.

Its subcellular location is the nucleus. The catalysed reaction is N(6),N(6)-dimethyl-L-lysyl(36)-[histone H3] + 2 2-oxoglutarate + 2 O2 = L-lysyl(36)-[histone H3] + 2 formaldehyde + 2 succinate + 2 CO2. Its function is as follows. Histone demethylase that specifically demethylates 'Lys-36' of histone H3, thereby playing a central role in histone code. Does not demethylate H3 'Lys-4' nor 'Lys-79'. The polypeptide is JmjC domain-containing histone demethylation protein 1 (JHD1) (Saccharomyces cerevisiae (strain ATCC 204508 / S288c) (Baker's yeast)).